Reading from the N-terminus, the 1036-residue chain is uncharacterized protein (1036 aa).

The first 24 residues, 1-24, serve as a signal peptide directing secretion; the sequence is MKRVGLIGVIMAALLVISATPVMA. Residues 1011–1033 form a helical membrane-spanning segment; it reads GGGVPGFEAVFAIAGLLAVAYLL.

It localises to the membrane. This is an uncharacterized protein from Archaeoglobus fulgidus (strain ATCC 49558 / DSM 4304 / JCM 9628 / NBRC 100126 / VC-16).